A 507-amino-acid chain; its full sequence is Dihydrolipoyllysine-residue acetyltransferase component of pyruvate dehydrogenase complex, mitochondrial (507 aa).

In terms of domain architecture, Lipoyl-binding spans 77–153 (HNRVALPALS…PIGKLLCIIV (77 aa)). Position 118 is an N6-lipoyllysine (lysine 118). Disordered regions lie at residues 168–223 (DGAS…VSAS) and 248–270 (RILA…TQAV). The Peripheral subunit-binding (PSBD) domain occupies 221–258 (SASPFAKKLAAENGLDLSGVSGSGPGGRILASDLSQAP). Residues histidine 480 and aspartate 484 contribute to the active site.

The protein belongs to the 2-oxoacid dehydrogenase family. (R)-lipoate is required as a cofactor.

It is found in the mitochondrion matrix. It catalyses the reaction N(6)-[(R)-dihydrolipoyl]-L-lysyl-[protein] + acetyl-CoA = N(6)-[(R)-S(8)-acetyldihydrolipoyl]-L-lysyl-[protein] + CoA. Its function is as follows. The pyruvate dehydrogenase complex catalyzes the overall conversion of pyruvate to acetyl-CoA and CO(2). It contains multiple copies of three enzymatic components: pyruvate dehydrogenase (E1), dihydrolipoamide acetyltransferase (E2) and lipoamide dehydrogenase (E3). This chain is Dihydrolipoyllysine-residue acetyltransferase component of pyruvate dehydrogenase complex, mitochondrial, found in Caenorhabditis elegans.